Reading from the N-terminus, the 752-residue chain is Multifunctional tryptophan biosynthesis protein (752 aa).

Residues 3–202 (FTLLIDNYDS…IQMKGGKWGG (200 aa)) form the Glutamine amidotransferase type-1 domain. 58–60 (GPG) contacts L-glutamine. Cysteine 86 acts as the Nucleophile; for GATase activity in catalysis. 136–137 (SL) lines the L-glutamine pocket. Catalysis depends on for GATase activity residues histidine 176 and glutamate 178. Residues 231 to 495 (ILNRIHAQRL…DTKAFLRSLI (265 aa)) are indole-3-glycerol phosphate synthase. Positions 509 to 752 (LVKICGIRST…VEAFVKAVRG (244 aa)) are N-(5'-phosphoribosyl)anthranilate isomerase.

The enzyme catalyses N-(5-phospho-beta-D-ribosyl)anthranilate = 1-(2-carboxyphenylamino)-1-deoxy-D-ribulose 5-phosphate. It catalyses the reaction 1-(2-carboxyphenylamino)-1-deoxy-D-ribulose 5-phosphate + H(+) = (1S,2R)-1-C-(indol-3-yl)glycerol 3-phosphate + CO2 + H2O. It carries out the reaction chorismate + L-glutamine = anthranilate + pyruvate + L-glutamate + H(+). It functions in the pathway amino-acid biosynthesis; L-tryptophan biosynthesis; L-tryptophan from chorismate: step 1/5. The protein operates within amino-acid biosynthesis; L-tryptophan biosynthesis; L-tryptophan from chorismate: step 3/5. Its pathway is amino-acid biosynthesis; L-tryptophan biosynthesis; L-tryptophan from chorismate: step 4/5. Its function is as follows. Trifunctional enzyme bearing the Gln amidotransferase (GATase) domain of anthranilate synthase, indole-glycerolphosphate synthase, and phosphoribosylanthranilate isomerase activities. The protein is Multifunctional tryptophan biosynthesis protein (TRP1) of Cryptococcus neoformans var. neoformans serotype D (strain B-3501A) (Filobasidiella neoformans).